Reading from the N-terminus, the 256-residue chain is Ribonuclease HII (256 aa).

The RNase H type-2 domain maps to 73–256; it reads KLIAGIDEAG…RVSFTKNFIV (184 aa). A divalent metal cation contacts are provided by Asp79, Glu80, and Asp171.

Belongs to the RNase HII family. Mn(2+) serves as cofactor. Requires Mg(2+) as cofactor.

The protein resides in the cytoplasm. The catalysed reaction is Endonucleolytic cleavage to 5'-phosphomonoester.. Endonuclease that specifically degrades the RNA of RNA-DNA hybrids. The polypeptide is Ribonuclease HII (Acetivibrio thermocellus (strain ATCC 27405 / DSM 1237 / JCM 9322 / NBRC 103400 / NCIMB 10682 / NRRL B-4536 / VPI 7372) (Clostridium thermocellum)).